Here is a 488-residue protein sequence, read N- to C-terminus: Tripartite motif-containing protein 6 (488 aa).

The segment at 15 to 60 adopts an RING-type zinc-finger fold; the sequence is CPICLELLTEPLSIDCGHSFCQVCIIGNSNNSVFGQGGRSSCPVCR. The B box-type zinc finger occupies 92 to 133; that stretch reads LEVIFCALHGEKLQLFCKEDGKLICWLCERSQEHRGHHTFLM. Zn(2+)-binding residues include Cys-97, His-100, Cys-119, and His-125. Positions 132 to 223 form a coiled coil; it reads LMEEVAQEYQ…SIIEKAEGDL (92 aa). Residues 282–488 enclose the B30.2/SPRY domain; that stretch reads DLRKMLKVFR…VPMTLRRPTS (207 aa).

The protein belongs to the TRIM/RBCC family. As to quaternary structure, homotrimer. Forms heteromultimers (via B30.2/SPRY domain) with TRIM5. Interacts with MYC. Interacts (via SPRY domain) with IKBKE. Interacts with VAMP8; this interaction contributes to the activation of the type I interferon antiviral response. Interacts with DHX16.

The protein resides in the cytoplasm. It catalyses the reaction S-ubiquitinyl-[E2 ubiquitin-conjugating enzyme]-L-cysteine + [acceptor protein]-L-lysine = [E2 ubiquitin-conjugating enzyme]-L-cysteine + N(6)-ubiquitinyl-[acceptor protein]-L-lysine.. It functions in the pathway protein modification; protein ubiquitination. In terms of biological role, E3 ubiquitin ligase that plays a crucial role in the activation of the IKBKE-dependent branch of the type I interferon signaling pathway. In concert with the ubiquitin-conjugating E2 enzyme UBE2K, synthesizes unanchored 'Lys-48'-linked polyubiquitin chains that promote the oligomerization and autophosphorylation of IKBKE leading to stimulation of an antiviral response. Also ubiquitinates MYC and inhibits its transcription activation activity, maintaining the pluripotency of embryonic stem cells. Promotes the association of unanchored 'Lys-48'-polyubiquitin chains with DHX16 leading to enhancement of RIGI-mediated innate antiviral immune response. This Mus musculus (Mouse) protein is Tripartite motif-containing protein 6 (Trim6).